A 532-amino-acid chain; its full sequence is CTP synthase (532 aa).

The amidoligase domain stretch occupies residues 1-267 (MTKFIFVTGG…DDIVLKILGL (267 aa)). Ser13 contributes to the CTP binding site. Ser13 contributes to the UTP binding site. 14 to 19 (SLGKGI) is a binding site for ATP. Tyr54 provides a ligand contact to L-glutamine. Asp71 provides a ligand contact to ATP. Residues Asp71 and Glu141 each contribute to the Mg(2+) site. CTP is bound by residues 148–150 (DIE), 188–193 (KTKPTQ), and Lys224. Residues 188–193 (KTKPTQ) and Lys224 each bind UTP. Residues 292–532 (EIAIVGKYVE…EFVKATLANR (241 aa)) enclose the Glutamine amidotransferase type-1 domain. Residue Gly354 coordinates L-glutamine. The Nucleophile; for glutamine hydrolysis role is filled by Cys381. Residues 382–385 (LGMQ), Glu405, and Arg462 contribute to the L-glutamine site. Catalysis depends on residues His507 and Glu509.

The protein belongs to the CTP synthase family. Homotetramer.

The enzyme catalyses UTP + L-glutamine + ATP + H2O = CTP + L-glutamate + ADP + phosphate + 2 H(+). It carries out the reaction L-glutamine + H2O = L-glutamate + NH4(+). The catalysed reaction is UTP + NH4(+) + ATP = CTP + ADP + phosphate + 2 H(+). Its pathway is pyrimidine metabolism; CTP biosynthesis via de novo pathway; CTP from UDP: step 2/2. Its activity is regulated as follows. Allosterically activated by GTP, when glutamine is the substrate; GTP has no effect on the reaction when ammonia is the substrate. The allosteric effector GTP functions by stabilizing the protein conformation that binds the tetrahedral intermediate(s) formed during glutamine hydrolysis. Inhibited by the product CTP, via allosteric rather than competitive inhibition. In terms of biological role, catalyzes the ATP-dependent amination of UTP to CTP with either L-glutamine or ammonia as the source of nitrogen. Regulates intracellular CTP levels through interactions with the four ribonucleotide triphosphates. In Desulfitobacterium hafniense (strain Y51), this protein is CTP synthase.